The sequence spans 291 residues: Protease HtpX homolog (291 aa).

A run of 2 helical transmembrane segments spans residues 11 to 31 (INTF…GLLA) and 34 to 54 (FLGM…ACVQ). Residue histidine 140 participates in Zn(2+) binding. Glutamate 141 is a catalytic residue. Histidine 144 contacts Zn(2+). 2 helical membrane-spanning segments follow: residues 155 to 175 (IVFG…RALI) and 186 to 206 (AFSF…AMLV). Glutamate 215 lines the Zn(2+) pocket.

This sequence belongs to the peptidase M48B family. The cofactor is Zn(2+).

It is found in the cell membrane. The sequence is that of Protease HtpX homolog from Tropheryma whipplei (strain TW08/27) (Whipple's bacillus).